An 83-amino-acid chain; its full sequence is Acyl carrier protein MmaB (83 aa).

The region spanning 3 to 83 is the Carrier domain; it reads DPVRQRILLA…LSQSELESPT (81 aa). O-(pantetheine 4'-phosphoryl)serine is present on S39.

Belongs to the acyl carrier protein (ACP) family. The cofactor is pantetheine 4'-phosphate.

It functions in the pathway lipid metabolism; fatty acid metabolism. In terms of biological role, acyl-carrier protein (ACP) involved in the biosynthesis of a unique class of isonitrile lipopeptides (INLPs) that seem to play a role in metal acquisition in M.marinum. Is the dedicated ACP for the loading of activated acyl groups catalyzed by MmaC. The chain is Acyl carrier protein MmaB from Mycobacterium marinum (strain ATCC BAA-535 / M).